A 3530-amino-acid polypeptide reads, in one-letter code: Unconventional myosin-XV (3530 aa).

3 disordered regions span residues 1-46 (MAKE…RTPK), 615-710 (AGMD…PAHV), and 730-1057 (EVPP…QKTL). The span at 663–681 (PPVPPRPPSSGPPPAPPLS) shows a compositional bias: pro residues. Low complexity-rich tracts occupy residues 682 to 693 (PALSGLPRPASP), 753 to 763 (AAFGFPGASPR), and 823 to 835 (SPAP…RLGP). Residues 836 to 850 (PGSPLPGSPRPPSPP) show a composition bias toward pro residues. The segment covering 859–869 (RSSLNLPSRLP) has biased composition (low complexity). The segment covering 903–913 (PLEHRESPREP) has biased composition (basic and acidic residues). A compositionally biased stretch (pro residues) spans 1027–1038 (TKPPTPAPPKDV). Residues 1222–1899 (DGVEDMTQLE…LYQLLESMRE (678 aa)) enclose the Myosin motor domain. 1315–1322 (GESGSGKT) contributes to the ATP binding site. The stretch at 1323–1350 (EATKLILRYLAAMNQKREVMQQIKILEA) forms a coiled coil. The actin-binding stretch occupies residues 1792–1799 (FMRCLKPN). The tract at residues 1888 to 2029 (EHLYQLLESM…AQVPQVAPVR (142 aa)) is neck or regulatory domain. 3 IQ domains span residues 1902–1924 (LNLA…RFRS), 1925–1954 (LRHK…SLVK), and 1955–1976 (FRSL…AEWR). The interval 2030-3530 (TPRLQAEPRV…TLPPSEITLL (1501 aa)) is tail. In terms of domain architecture, MyTH4 1 spans 2065 to 2217 (MLTVPLRTPL…PTQLEWTATY (153 aa)). 4 disordered regions span residues 2311–2381 (AASR…GEPA), 2414–2446 (YRMK…IPGL), 2490–2509 (AEKP…GPPA), and 2644–2665 (TSAP…LEPP). The span at 2349–2371 (GYSSHNQDGTNGETEAQRGTATH) shows a compositional bias: polar residues. Residues 2417–2427 (KGGGQPGGGSS) are compositionally biased toward gly residues. Residues 2867–2953 (KDSDYVVAVR…PSELVQPAAA (87 aa)) form the SH3 domain. The MyTH4 2 domain maps to 3050 to 3204 (FTKTPLQESL…PSSIELRAML (155 aa)). An FERM domain is found at 3209 to 3530 (SKRQLFLLPG…TLPPSEITLL (322 aa)).

It belongs to the TRAFAC class myosin-kinesin ATPase superfamily. Myosin family. In terms of assembly, interacts with the third PDZ domain of WHRN which is necessary for localization of WHRN to stereocilium tips. Interacts with EPS8. Interacts with FASLG. In terms of tissue distribution, highly expressed in pituitary. Also expressed at lower levels in adult brain, kidney, liver, lung, pancreas, placenta and skeletal muscle. Not expressed in brain. In the pituitary, highly expressed in anterior gland cells.

It localises to the cell projection. The protein localises to the stereocilium. Its subcellular location is the cytoplasm. The protein resides in the cytoskeleton. In terms of biological role, myosins are actin-based motor molecules with ATPase activity. Unconventional myosins serve in intracellular movements. Their highly divergent tails are presumed to bind to membranous compartments, which would be moved relative to actin filaments. Required for the arrangement of stereocilia in mature hair bundles. The sequence is that of Unconventional myosin-XV (MYO15A) from Homo sapiens (Human).